A 344-amino-acid polypeptide reads, in one-letter code: L-rhamnose-proton symporter (344 aa).

Helical transmembrane passes span Ala4 to Ala24, Trp38 to Leu58, Leu74 to Met94, Met101 to Ile121, Thr137 to Leu157, Leu175 to Ala195, Leu214 to Ile234, Val259 to Gly279, Ile290 to Leu310, and Val323 to Ala343.

It belongs to the L-rhamnose transporter (TC 2.A.7.6) family.

It is found in the cell inner membrane. It catalyses the reaction L-rhamnopyranose(in) + H(+)(in) = L-rhamnopyranose(out) + H(+)(out). Functionally, uptake of L-rhamnose across the cytoplasmic membrane with the concomitant transport of protons into the cell (symport system). This is L-rhamnose-proton symporter from Escherichia coli (strain K12 / MC4100 / BW2952).